Here is a 293-residue protein sequence, read N- to C-terminus: Energy-coupling factor transporter ATP-binding protein EcfA2 (293 aa).

The ABC transporter domain maps to 3 to 246 (ITFQKVEHRY…ADELEKIGVD (244 aa)). Residue 40–47 (GHTGSGKS) coordinates ATP.

It belongs to the ABC transporter superfamily. Energy-coupling factor EcfA family. In terms of assembly, forms a stable energy-coupling factor (ECF) transporter complex composed of 2 membrane-embedded substrate-binding proteins (S component), 2 ATP-binding proteins (A component) and 2 transmembrane proteins (T component).

Its subcellular location is the cell membrane. ATP-binding (A) component of a common energy-coupling factor (ECF) ABC-transporter complex. Unlike classic ABC transporters this ECF transporter provides the energy necessary to transport a number of different substrates. The polypeptide is Energy-coupling factor transporter ATP-binding protein EcfA2 (Bacillus cereus (strain ATCC 14579 / DSM 31 / CCUG 7414 / JCM 2152 / NBRC 15305 / NCIMB 9373 / NCTC 2599 / NRRL B-3711)).